A 240-amino-acid chain; its full sequence is Manganese transport system ATP-binding protein MntB (240 aa).

An ABC transporter domain is found at M1 to P233. Residue G33–S40 participates in ATP binding.

Belongs to the ABC transporter superfamily.

The protein localises to the cell membrane. In terms of biological role, this protein is probably a component of a manganese permease, a binding protein-dependent, ATP-driven transport system. Probably responsible for energy coupling to the transport system. This chain is Manganese transport system ATP-binding protein MntB (mntB), found in Listeria innocua serovar 6a (strain ATCC BAA-680 / CLIP 11262).